A 186-amino-acid polypeptide reads, in one-letter code: Elongation factor P (186 aa).

The protein belongs to the elongation factor P family.

It localises to the cytoplasm. Its pathway is protein biosynthesis; polypeptide chain elongation. Its function is as follows. Involved in peptide bond synthesis. Stimulates efficient translation and peptide-bond synthesis on native or reconstituted 70S ribosomes in vitro. Probably functions indirectly by altering the affinity of the ribosome for aminoacyl-tRNA, thus increasing their reactivity as acceptors for peptidyl transferase. This Synechococcus sp. (strain RCC307) protein is Elongation factor P.